A 31-amino-acid chain; its full sequence is Photosystem II reaction center protein T (31 aa).

The helical transmembrane segment at 3-23 (SVAYILILTMALAVLFFAIAF) threads the bilayer.

This sequence belongs to the PsbT family. As to quaternary structure, PSII is composed of 1 copy each of membrane proteins PsbA, PsbB, PsbC, PsbD, PsbE, PsbF, PsbH, PsbI, PsbJ, PsbK, PsbL, PsbM, PsbT, PsbX, PsbY, PsbZ, Psb30/Ycf12, peripheral proteins PsbO, CyanoQ (PsbQ), PsbU, PsbV and a large number of cofactors. It forms dimeric complexes.

The protein localises to the cellular thylakoid membrane. Its function is as follows. Found at the monomer-monomer interface of the photosystem II (PS II) dimer, plays a role in assembly and dimerization of PSII. PSII is a light-driven water plastoquinone oxidoreductase, using light energy to abstract electrons from H(2)O, generating a proton gradient subsequently used for ATP formation. The sequence is that of Photosystem II reaction center protein T from Gloeothece citriformis (strain PCC 7424) (Cyanothece sp. (strain PCC 7424)).